A 189-amino-acid polypeptide reads, in one-letter code: MKGVPRTVAVVGVPGTGKTTVCRILSGMVRHTYINYGELMLRVAGEWNLAETLEDLFKLPMDQQHLIWLEAAHRIRRLDYVLMDLHGLDRSPLGYLISLPVDIISPDIIVILESDPQSILWRRMADSKMRVRESLESLREHMEMLRTSMFVCSAVLGSVVSIVENHDPEEAALDILGIIEAAWAGDTTP.

Residue 12-20 (GVPGTGKTT) coordinates ATP.

Belongs to the archaeal adenylate kinase family.

In Methanothermobacter thermautotrophicus (strain ATCC 29096 / DSM 1053 / JCM 10044 / NBRC 100330 / Delta H) (Methanobacterium thermoautotrophicum), this protein is Adenylate kinase homolog MTH_1663.